Here is a 1661-residue protein sequence, read N- to C-terminus: Mediator of RNA polymerase II transcription subunit 12 (1661 aa).

Disordered regions lie at residues 1 to 22, 524 to 550, and 1501 to 1527; these read MSKT…VSNS, KDRR…ITGK, and DDMT…PDGT. Composition is skewed to polar residues over residues 7–22, 539–548, and 1505–1527; these read RNSL…VSNS, DTKNNYNSIT, and TDTS…PDGT.

The protein belongs to the Mediator complex subunit 12 family. As to quaternary structure, component of the SRB8-11 complex, which itself associates with the Mediator complex.

The protein localises to the nucleus. Functionally, component of the SRB8-11 complex. The SRB8-11 complex is a regulatory module of the Mediator complex which is itself involved in regulation of basal and activated RNA polymerase II-dependent transcription. The SRB8-11 complex may be involved in the transcriptional repression of a subset of genes regulated by Mediator. It may inhibit the association of the Mediator complex with RNA polymerase II to form the holoenzyme complex. This Debaryomyces hansenii (strain ATCC 36239 / CBS 767 / BCRC 21394 / JCM 1990 / NBRC 0083 / IGC 2968) (Yeast) protein is Mediator of RNA polymerase II transcription subunit 12 (SRB8).